Reading from the N-terminus, the 130-residue chain is Small ribosomal subunit protein uS11 (130 aa).

Belongs to the universal ribosomal protein uS11 family. Part of the 30S ribosomal subunit. Interacts with proteins S7 and S18. Binds to IF-3.

Functionally, located on the platform of the 30S subunit, it bridges several disparate RNA helices of the 16S rRNA. Forms part of the Shine-Dalgarno cleft in the 70S ribosome. This chain is Small ribosomal subunit protein uS11, found in Thermotoga petrophila (strain ATCC BAA-488 / DSM 13995 / JCM 10881 / RKU-1).